Consider the following 662-residue polypeptide: Methionine--tRNA ligase (662 aa).

The short motif at Pro13–His23 is the 'HIGH' region element. Residues Cys144, Cys147, Cys156, and Cys160 each contribute to the Zn(2+) site. The 'KMSKS' region motif lies at Lys326–Ser330. Residue Lys329 participates in ATP binding. A tRNA-binding domain is found at Asp564 to Arg662.

It belongs to the class-I aminoacyl-tRNA synthetase family. MetG type 1 subfamily. In terms of assembly, homodimer. Zn(2+) serves as cofactor.

It is found in the cytoplasm. It carries out the reaction tRNA(Met) + L-methionine + ATP = L-methionyl-tRNA(Met) + AMP + diphosphate. Its function is as follows. Is required not only for elongation of protein synthesis but also for the initiation of all mRNA translation through initiator tRNA(fMet) aminoacylation. The chain is Methionine--tRNA ligase from Methanoregula boonei (strain DSM 21154 / JCM 14090 / 6A8).